Here is a 232-residue protein sequence, read N- to C-terminus: MSAPTFRLCPADIGLEVAFAGRSNAGKSSAINALTNQRQLARSSKTPGRTQMINFFNVGDADRRLVDLPGYGYAAVPLEMKKEWQVELEEYLVSRSSLAGLVLMTDIRHPLKFFDEQMLRWAKDGELPVHILLTKADKLKYGASKNALLNTRKRLKQLGLNCSIQLFSALRKEGLDELAGVMGNWYEYQLEANKIIESSFALLEGSELEDAIEKDAVQKDKNLKDSAQKESK.

In terms of domain architecture, EngB-type G spans 13-188 (IGLEVAFAGR…AGVMGNWYEY (176 aa)). GTP is bound by residues 21–28 (GRSNAGKS), 48–52 (GRTQM), 67–70 (DLPG), 134–137 (TKAD), and 167–169 (FSA). Residues Ser-28 and Thr-50 each contribute to the Mg(2+) site.

It belongs to the TRAFAC class TrmE-Era-EngA-EngB-Septin-like GTPase superfamily. EngB GTPase family. Requires Mg(2+) as cofactor.

In terms of biological role, necessary for normal cell division and for the maintenance of normal septation. This Psychrobacter arcticus (strain DSM 17307 / VKM B-2377 / 273-4) protein is Probable GTP-binding protein EngB.